Consider the following 334-residue polypeptide: Biotin synthase (334 aa).

The 231-residue stretch at 55–285 folds into the Radical SAM core domain; that stretch reads GSSGSIHACS…VHPRKIIKIA (231 aa). 3 residues coordinate [4Fe-4S] cluster: Cys73, Cys77, and Cys80. The [2Fe-2S] cluster site is built by Cys152, Cys213, and Lys283.

Belongs to the radical SAM superfamily. Biotin synthase family. In terms of assembly, homodimer. Requires [4Fe-4S] cluster as cofactor. The cofactor is [2Fe-2S] cluster.

The catalysed reaction is (4R,5S)-dethiobiotin + (sulfur carrier)-SH + 2 reduced [2Fe-2S]-[ferredoxin] + 2 S-adenosyl-L-methionine = (sulfur carrier)-H + biotin + 2 5'-deoxyadenosine + 2 L-methionine + 2 oxidized [2Fe-2S]-[ferredoxin]. Its pathway is cofactor biosynthesis; biotin biosynthesis; biotin from 7,8-diaminononanoate: step 2/2. Catalyzes the conversion of dethiobiotin (DTB) to biotin by the insertion of a sulfur atom into dethiobiotin via a radical-based mechanism. The chain is Biotin synthase from Chlorobium phaeobacteroides (strain DSM 266 / SMG 266 / 2430).